The primary structure comprises 223 residues: Killer cell lectin-like receptor subfamily B member 1B allele B (223 aa).

Residues Met1–Cys45 lie on the Cytoplasmic side of the membrane. The ITIM motif motif lies at Val5–Leu10. The LCK-binding motif signature appears at Cys31 to Pro34. The helical; Signal-anchor for type II membrane protein transmembrane segment at Ala46–Leu66 threads the bilayer. The Extracellular portion of the chain corresponds to Gln67–Ser223. Residues His101–Gln211 enclose the C-type lectin domain. 2 cysteine pairs are disulfide-bonded: Cys122/Cys210 and Cys189/Cys202.

Homodimer; disulfide-linked. Interacts with tyrosine kinase LCK. Binds PTPN6/SHP-1 in a phosphorylation-dependent manner. In terms of tissue distribution, expressed in a subset of natural killer cells.

It is found in the membrane. In terms of biological role, receptor for CLEC2D/OCIL. Ligand-binding contributes to inhibition of cytotoxic natural killer (NK) cells. May mediate MHC class I-independent 'missing-self' recognition of allografts, tumor cells and virus-infected cells. The polypeptide is Killer cell lectin-like receptor subfamily B member 1B allele B (Rattus norvegicus (Rat)).